A 344-amino-acid chain; its full sequence is Laforin, isoform 9 (344 aa).

4 disordered regions span residues 1 to 44 (MHPK…PGPG), 58 to 134 (GGGA…PRGH), 158 to 188 (PAPG…RRAS), and 320 to 344 (SLKK…QCAT). The segment covering 77–88 (AARAGALGAARC) has biased composition (low complexity). The segment covering 101–131 (RGPGPAGAGPVARGGGAGGRGGGAGRGGAGP) has biased composition (gly residues). Residues 179 to 188 (RPRRPRRRAS) show a composition bias toward basic residues.

As to quaternary structure, interacts with isoform 1 and isoform 2.

Its subcellular location is the nucleus. The protein is Laforin, isoform 9 of Homo sapiens (Human).